The primary structure comprises 217 residues: Peroxiredoxin (217 aa).

The 158-residue stretch at 2–159 folds into the Thioredoxin domain; the sequence is VVIGEKFPEV…VVRLVKALQT (158 aa). C46 (cysteine sulfenic acid (-SOH) intermediate) is an active-site residue. R122 lines the substrate pocket.

It belongs to the peroxiredoxin family. Prx6 subfamily. In terms of assembly, homodecamer. Pentamer of dimers that assemble into a ring structure.

The protein localises to the cytoplasm. It carries out the reaction a hydroperoxide + [thioredoxin]-dithiol = an alcohol + [thioredoxin]-disulfide + H2O. Its function is as follows. Thiol-specific peroxidase that catalyzes the reduction of hydrogen peroxide and organic hydroperoxides to water and alcohols, respectively. Plays a role in cell protection against oxidative stress by detoxifying peroxides. This chain is Peroxiredoxin, found in Methanococcus maripaludis (strain C5 / ATCC BAA-1333).